Reading from the N-terminus, the 66-residue chain is Large ribosomal subunit protein uL29 (66 aa).

Belongs to the universal ribosomal protein uL29 family.

This Borrelia hermsii (strain HS1 / DAH) protein is Large ribosomal subunit protein uL29.